The chain runs to 400 residues: MTAREFLEATEKEKLAPYATRSADSAGRTLHGDEPDDYRTCFQRDRDRILYSKVFKDLQHKTQVFLINEGDFYRTRLTHTLEVAQHARTFARALRLNEDLCEAIAYAHDLGHPPFGHSGEETLNDLLKDDGGFEHNIQSLRVVDFLEKRYQRYDGLNLCFETREGIARHNTTHDHPDTPPEFQNYSQASLEAQVVNIADPLAYCAHDLEDALNAGYLRMKDLRNMENPLVRRVFERCSSRYPDFLKADTVLQSRILVRTLIEEANIAVIRQTSRNIELYGISSVEEARSLPEDVVAAPAGVWKNFDALKAYLFENVYRKPQVCIMNEKGKLIIRRIFHHLEKRPEMLPGIFKTRFDEAADSSGKRRVLADYISGMTDRYVMDLYMMMFEPYEKVMFEFRE.

Residues 76 to 204 (RLTHTLEVAQ…VNIADPLAYC (129 aa)) form the HD domain.

It belongs to the dGTPase family. Type 2 subfamily.

In Syntrophus aciditrophicus (strain SB), this protein is Deoxyguanosinetriphosphate triphosphohydrolase-like protein.